Here is a 940-residue protein sequence, read N- to C-terminus: Translation initiation factor IF-2 (940 aa).

Composition is skewed to low complexity over residues 138-147 and 161-208; these read APVEVVAEPE and PVVV…ITEL. A disordered region spans residues 138-354; sequence APVEVVAEPE…DRQTFQAPTE (217 aa). Composition is skewed to basic and acidic residues over residues 214-271 and 289-311; these read IAAR…EEAA and AKAD…DGAK. Residues 440–609 form the tr-type G domain; the sequence is PRAPVVTVMG…LLQAEVLELT (170 aa). Residues 449-456 form a G1 region; sequence GHVDHGKT. GTP is bound at residue 449-456; the sequence is GHVDHGKT. Positions 474-478 are G2; sequence GITQH. A G3 region spans residues 495–498; the sequence is DTPG. Residues 495 to 499 and 549 to 552 each bind GTP; these read DTPGH and TKID. The segment at 549–552 is G4; the sequence is TKID. The tract at residues 585-587 is G5; sequence SAK.

Belongs to the TRAFAC class translation factor GTPase superfamily. Classic translation factor GTPase family. IF-2 subfamily.

It localises to the cytoplasm. In terms of biological role, one of the essential components for the initiation of protein synthesis. Protects formylmethionyl-tRNA from spontaneous hydrolysis and promotes its binding to the 30S ribosomal subunits. Also involved in the hydrolysis of GTP during the formation of the 70S ribosomal complex. The sequence is that of Translation initiation factor IF-2 from Azoarcus sp. (strain BH72).